We begin with the raw amino-acid sequence, 202 residues long: Xanthine phosphoribosyltransferase (202 aa).

Residues Leu-20 and Asn-27 each contribute to the xanthine site. 128 to 132 (ANGEA) contributes to the 5-phospho-alpha-D-ribose 1-diphosphate binding site. Xanthine is bound at residue Lys-156.

The protein belongs to the purine/pyrimidine phosphoribosyltransferase family. Xpt subfamily. In terms of assembly, homodimer.

The protein localises to the cytoplasm. The enzyme catalyses XMP + diphosphate = xanthine + 5-phospho-alpha-D-ribose 1-diphosphate. Its pathway is purine metabolism; XMP biosynthesis via salvage pathway; XMP from xanthine: step 1/1. In terms of biological role, converts the preformed base xanthine, a product of nucleic acid breakdown, to xanthosine 5'-monophosphate (XMP), so it can be reused for RNA or DNA synthesis. This chain is Xanthine phosphoribosyltransferase, found in Alkaliphilus metalliredigens (strain QYMF).